The following is a 113-amino-acid chain: MNTVRVTFLLVFVLPVSLGQADKDENRMEMQEKTEQGKSYLDFAENLLLQKLEELEAKLLEEDSEESRNSRQKRCIGEGVPCDENDPRCCSGLVCLKPTLHGIWYKSYYCYKK.

The first 21 residues, 1–21 (MNTVRVTFLLVFVLPVSLGQA), serve as a signal peptide directing secretion. A propeptide spanning residues 22–74 (DKDENRMEMQEKTEQGKSYLDFAENLLLQKLEELEAKLLEEDSEESRNSRQKR) is cleaved from the precursor. Positions 60-69 (LEEDSEESRN) are enriched in basic and acidic residues. The disordered stretch occupies residues 60-83 (LEEDSEESRNSRQKRCIGEGVPCD). Disulfide bonds link Cys75–Cys90, Cys82–Cys95, and Cys89–Cys110.

Belongs to the neurotoxin 14 (magi-1) family. 01 (HNTX-16) subfamily. Expressed by the venom gland.

It localises to the secreted. In terms of biological role, probable ion channel inhibitor. This is U11-theraphotoxin-Hhn1a from Cyriopagopus hainanus (Chinese bird spider).